A 661-amino-acid chain; its full sequence is Phospholipid:diacylglycerol acyltransferase (661 aa).

Positions 1–71 (MGTLFRRNVQ…FDRKRDGNGR (71 aa)) are disordered. Residues 1–80 (MGTLFRRNVQ…RKRWRDSRRL (80 aa)) lie on the Cytoplasmic side of the membrane. Residues 34 to 48 (HIHHQQGLGHKRRRG) are compositionally biased toward basic residues. 2 consecutive short sequence motifs (bipartite nuclear localization signal) follow at residues 43 to 50 (HKRRRGIS) and 64 to 71 (RKRDGNGR). Positions 54-70 (KRNERGKDFDRKRDGNG) are enriched in basic and acidic residues. A helical membrane pass occupies residues 81–101 (IFILGAFLGVLLPFSFGAYHV). The Lumenal segment spans residues 102–661 (HNSDSDLFDN…QWVSQMPFPM (560 aa)). Gln162 contributes to the substrate binding site. A GHSXG lipase motif motif is present at residues 322–326 (GHSMG). Ser324 functions as the Acyl-ester intermediate in the catalytic mechanism. Met325 contributes to the substrate binding site. N-linked (GlcNAc...) asparagine glycans are attached at residues Asn453, Asn461, and Asn469. Residue Asp567 is the Charge relay system of the active site. The N-linked (GlcNAc...) asparagine glycan is linked to Asn594. His618 (charge relay system) is an active-site residue.

It belongs to the AB hydrolase superfamily. Lipase family.

The protein resides in the endoplasmic reticulum membrane. It localises to the nucleus inner membrane. It catalyses the reaction a glycerophospholipid + a 1,2-diacyl-sn-glycerol = a monoacylglycerophospholipid + a triacyl-sn-glycerol. The catalysed reaction is a 1-acyl-sn-glycerol + a 1,2-diacyl-sn-glycero-3-phosphocholine = a 1-acyl-sn-glycero-3-phosphocholine + a 1,2-diacyl-sn-glycerol. It carries out the reaction 1,2-di-(9Z-octadecenoyl)-sn-glycero-3-phosphoethanolamine + 1,2-di-(9Z-octadecenoyl)-sn-glycerol = 1-(9Z-octadecenoyl)-sn-glycero-3-phosphoethanolamine + 1,2,3-tri-(9Z-octadecenoyl)-glycerol. The enzyme catalyses 1,2-di-(9Z-octadecenoyl)-sn-glycerol + 1,2-di-(9Z-octadecenoyl)-sn-glycero-3-phosphocholine = 1,2,3-tri-(9Z-octadecenoyl)-glycerol + 1-(9Z-octadecenoyl)-sn-glycero-3-phosphocholine. It catalyses the reaction 1-(9Z-octadecenoyl)-sn-glycerol + 1,2-di-(9Z-octadecenoyl)-sn-glycero-3-phosphocholine = di-(9Z)-octadecenoylglycerol + 1-(9Z-octadecenoyl)-sn-glycero-3-phosphocholine. The catalysed reaction is 2-(9Z-octadecenoyl)-glycerol + 1,2-di-(9Z-octadecenoyl)-sn-glycero-3-phosphocholine = 1,2-di-(9Z-octadecenoyl)-glycerol + 1-(9Z-octadecenoyl)-sn-glycero-3-phosphocholine. It carries out the reaction 1-(9Z-octadecenoyl)-2-hexadecanoyl-sn-glycero-3-phosphoethanolamine + 1,2-di-(9Z-octadecenoyl)-sn-glycerol = 1,2-di-(9Z)-octadecenoyl-3-hexadecanoyl-sn-glycerol + 1-(9Z-octadecenoyl)-sn-glycero-3-phosphoethanolamine. The enzyme catalyses 1-(9Z-octadecenoyl)-2-octadecanoyl-sn-glycero-3-phosphoethanolamine + 1,2-di-(9Z-octadecenoyl)-sn-glycerol = 1,2-di-(9Z)-octadecenoyl-3-octadecanoyl-sn-glycerol + 1-(9Z-octadecenoyl)-sn-glycero-3-phosphoethanolamine. It catalyses the reaction 1-(9Z)-octadecenoyl-2-(9Z,12Z)-octadecadienoyl-sn-glycero-3-phosphoethanolamine + 1,2-di-(9Z-octadecenoyl)-sn-glycerol = 1,2-di-(9Z)-octadecenoyl-3-(9Z,12Z)-octadecadienoyl-sn-glycerol + 1-(9Z-octadecenoyl)-sn-glycero-3-phosphoethanolamine. Catalyzes triacylglycerol (TAG) formation by an acyl-CoA independent pathway. The enzyme specifically transfers acyl groups from the sn-2 position of a phospholipid to diacylglycerol (DAG), thus forming an sn-1-lysophospholipid. The preferred acyl donors are phosphatidylethanolamine (PE) and phosphatidylcholine (PC). Also capable of using broad acyl donors such as phosphatidic acid (PA), phosphatidylserine (PS), phosphatidylglycerol (PG) and phosphatidylinositol (PI), as well as monogalactosyldiacylglycerol (MGDG), digalactosyldiacylglycerol (DGDG), and acyl-CoA, and it is more likely to use unsaturated acyl donors. As acyl acceptors, it prefers 1,2- over 1,3-diacylglycerol (DAG). Additionally, has esterification activity that can utilize methanol as acyl acceptor to generate fatty acid methyl esters (FAME). Can also utilize ceramide instead of DAG, acylating the ceramides by attaching a fatty acid to the hydroxy group on the first carbon atom of the long-chain base to produce 1-O-acylceramides. Involved in lipid particle synthesis from the endoplasmic reticulum, promoting localized TAG production at discrete ER subdomains. Relocates from the endoplasmic reticulum to a subdomain of the inner nuclear membrane upon nutrient starvation, where it provides a site of TAG synthesis, which is coupled with nuclear membrane remodeling. This chain is Phospholipid:diacylglycerol acyltransferase, found in Saccharomyces cerevisiae (strain ATCC 204508 / S288c) (Baker's yeast).